An 849-amino-acid polypeptide reads, in one-letter code: MCNIIYNNVYQYNILKNIMSFVKEKNTPVMEQYLNLKAQYKDHLLFYRLGDFYELFFDDAIKAAKLLNIVLTKRGNSCGQEIPMCGVPAHSSESYLHKLIDLGFKVAICDQLETADEAKKRGYKSIVKRDVVRVVTPGTIIEDSLLEDKSNNYLASIVEQNDEYAISWLELSTGKFFHTLTSLKALDSDLLRISPRELLISEKFTEDEKIRSILKNYKISITQHAQSFFEYSKSHRTLCEFYKIRELGSIGNFSKVEIMACGALLEYVRVTQRGSIPRLEFPKTYKQQNFMLIDTSARRNLELFSTQFGEKKGSLISVIDHTVTASGGRLLKQMLASPLACSKAINLRLSTAQFFVNNHDSRRKIREILSNIPDIERSLSRLILGRGSPKDMNLLKIGLGKTLELSEFLCKIESGENGSLPQQYVIQTEIQPASRAGITVKSDESELSTIHKSLGNHKDLFELLNSAILDNNLSSVKEGGFIHSKYNSELSELSYILNNSNKLVTKLRESYRDLTGIAALKILHNNILGYYVEVSANHKITSDIFIHRQSLANSMRYTTNELKELENKILTARDAAIGLEMKIFSELCSEVAKESEKIALAANALAKLDIRTAFAELAVQNNYVKPIIDDSKEFNICSGRHPVVEVNDKFIANSINLAGIHLITGPNMAGKSTFLRQNALIAILAHMGSFVPAESAHIGVIDKIFSRVGATDNITAGYSTFMVEMIETATIVNQATDRSLVILDEIGRGTGVYDGLSIAQAVIEHIHNVNKCRAIFATHYHELTKVSKYLKNVKCFCVKIREWNGEVIFLHEVIEGIADESYGIHVAKLAGFPDSVLNRASEVFEELKA.

665–672 (GPNMAGKS) is a binding site for ATP.

The protein belongs to the DNA mismatch repair MutS family.

This protein is involved in the repair of mismatches in DNA. It is possible that it carries out the mismatch recognition step. This protein has a weak ATPase activity. This Wolbachia pipientis wMel protein is DNA mismatch repair protein MutS.